The primary structure comprises 313 residues: Ribosomal RNA small subunit methyltransferase H (313 aa).

Residues Gly35–His37, Asp55, Phe79, Asp101, and Gln108 each bind S-adenosyl-L-methionine.

This sequence belongs to the methyltransferase superfamily. RsmH family.

It localises to the cytoplasm. The enzyme catalyses cytidine(1402) in 16S rRNA + S-adenosyl-L-methionine = N(4)-methylcytidine(1402) in 16S rRNA + S-adenosyl-L-homocysteine + H(+). Functionally, specifically methylates the N4 position of cytidine in position 1402 (C1402) of 16S rRNA. The sequence is that of Ribosomal RNA small subunit methyltransferase H from Shigella flexneri serotype 5b (strain 8401).